The following is an 867-amino-acid chain: Alanine--tRNA ligase (867 aa).

Residues His554, His558, Cys656, and His660 each coordinate Zn(2+).

It belongs to the class-II aminoacyl-tRNA synthetase family. It depends on Zn(2+) as a cofactor.

It is found in the cytoplasm. It catalyses the reaction tRNA(Ala) + L-alanine + ATP = L-alanyl-tRNA(Ala) + AMP + diphosphate. Its function is as follows. Catalyzes the attachment of alanine to tRNA(Ala) in a two-step reaction: alanine is first activated by ATP to form Ala-AMP and then transferred to the acceptor end of tRNA(Ala). Also edits incorrectly charged Ser-tRNA(Ala) and Gly-tRNA(Ala) via its editing domain. The sequence is that of Alanine--tRNA ligase from Methylococcus capsulatus (strain ATCC 33009 / NCIMB 11132 / Bath).